The chain runs to 648 residues: Acetyl-coenzyme A synthetase (648 aa).

Residues 190 to 193 (RGGK), T308, and N332 contribute to the CoA site. ATP is bound by residues 384-386 (GEP), 408-413 (DTWWQT), D497, and R512. S520 lines the CoA pocket. R523 provides a ligand contact to ATP. Residues V534, H536, and V539 each coordinate Mg(2+). R581 provides a ligand contact to CoA. K606 is subject to N6-acetyllysine.

It belongs to the ATP-dependent AMP-binding enzyme family. The cofactor is Mg(2+). Acetylated. Deacetylation by the SIR2-homolog deacetylase activates the enzyme.

It carries out the reaction acetate + ATP + CoA = acetyl-CoA + AMP + diphosphate. Its function is as follows. Catalyzes the conversion of acetate into acetyl-CoA (AcCoA), an essential intermediate at the junction of anabolic and catabolic pathways. AcsA undergoes a two-step reaction. In the first half reaction, AcsA combines acetate with ATP to form acetyl-adenylate (AcAMP) intermediate. In the second half reaction, it can then transfer the acetyl group from AcAMP to the sulfhydryl group of CoA, forming the product AcCoA. This is Acetyl-coenzyme A synthetase from Bradyrhizobium diazoefficiens (strain JCM 10833 / BCRC 13528 / IAM 13628 / NBRC 14792 / USDA 110).